Reading from the N-terminus, the 1310-residue chain is Clustered mitochondria protein homolog (1310 aa).

One can recognise a Clu domain in the interval D375 to Q619. Basic and acidic residues predominate over residues K662–G682. Disordered regions lie at residues K662 to L692 and V931 to V960. TPR repeat units follow at residues A1033 to T1066, I1075 to I1108, and I1117 to L1150. Disordered stretches follow at residues V1245 to S1266 and G1281 to A1310.

The protein belongs to the CLU family. As to quaternary structure, may associate with the eukaryotic translation initiation factor 3 (eIF-3) complex.

It is found in the cytoplasm. Functionally, mRNA-binding protein involved in proper cytoplasmic distribution of mitochondria. The polypeptide is Clustered mitochondria protein homolog (Aspergillus fumigatus (strain CBS 144.89 / FGSC A1163 / CEA10) (Neosartorya fumigata)).